The sequence spans 37 residues: Large ribosomal subunit protein bL36c (37 aa).

This sequence belongs to the bacterial ribosomal protein bL36 family.

It localises to the plastid. The protein resides in the chloroplast. This chain is Large ribosomal subunit protein bL36c, found in Pinus koraiensis (Korean pine).